A 276-amino-acid polypeptide reads, in one-letter code: Diaminopimelate epimerase (276 aa).

Substrate is bound by residues N11, Q44, and N64. C73 (proton donor) is an active-site residue. Substrate contacts are provided by residues 74 to 75, N157, N190, and 208 to 209; these read GN and ER. Residue C217 is the Proton acceptor of the active site. 218 to 219 serves as a coordination point for substrate; the sequence is GS.

This sequence belongs to the diaminopimelate epimerase family. Homodimer.

It is found in the cytoplasm. It carries out the reaction (2S,6S)-2,6-diaminopimelate = meso-2,6-diaminopimelate. It participates in amino-acid biosynthesis; L-lysine biosynthesis via DAP pathway; DL-2,6-diaminopimelate from LL-2,6-diaminopimelate: step 1/1. Catalyzes the stereoinversion of LL-2,6-diaminopimelate (L,L-DAP) to meso-diaminopimelate (meso-DAP), a precursor of L-lysine and an essential component of the bacterial peptidoglycan. In Blochmanniella floridana, this protein is Diaminopimelate epimerase.